The sequence spans 562 residues: Arginine--tRNA ligase (562 aa).

The 'HIGH' region motif lies at 121–131 (PNIAKPISMGH).

Belongs to the class-I aminoacyl-tRNA synthetase family. As to quaternary structure, monomer.

It is found in the cytoplasm. It catalyses the reaction tRNA(Arg) + L-arginine + ATP = L-arginyl-tRNA(Arg) + AMP + diphosphate. The sequence is that of Arginine--tRNA ligase from Lactiplantibacillus plantarum (strain ATCC BAA-793 / NCIMB 8826 / WCFS1) (Lactobacillus plantarum).